The sequence spans 659 residues: A-type ATP synthase subunit I (659 aa).

8 consecutive transmembrane segments (helical) span residues 376 to 396 (FFFG…IISA), 415 to 435 (IMLW…SYCG), 460 to 480 (MIAL…GFIV), 489 to 509 (GAIF…LFAL), 518 to 538 (LIVK…EVLA), 542 to 562 (MAVL…LSYA), 568 to 588 (ALAT…IWGI), and 590 to 610 (IASV…GHIF).

This sequence belongs to the V-ATPase 116 kDa subunit family. Has multiple subunits with at least A(3), B(3), C, D, E, F, H, I and proteolipid K(x).

The protein localises to the cell membrane. Its function is as follows. Component of the A-type ATP synthase that produces ATP from ADP in the presence of a proton gradient across the membrane. This chain is A-type ATP synthase subunit I, found in Pyrococcus horikoshii (strain ATCC 700860 / DSM 12428 / JCM 9974 / NBRC 100139 / OT-3).